The chain runs to 305 residues: Aspartate carbamoyltransferase catalytic subunit (305 aa).

Positions 60 and 61 each coordinate carbamoyl phosphate. Lys-88 serves as a coordination point for L-aspartate. Carbamoyl phosphate is bound by residues Arg-110, His-138, and Gln-141. 2 residues coordinate L-aspartate: Arg-171 and Arg-222. Residues Ala-263 and Pro-264 each coordinate carbamoyl phosphate.

It belongs to the aspartate/ornithine carbamoyltransferase superfamily. ATCase family. In terms of assembly, heterododecamer (2C3:3R2) of six catalytic PyrB chains organized as two trimers (C3), and six regulatory PyrI chains organized as three dimers (R2).

The catalysed reaction is carbamoyl phosphate + L-aspartate = N-carbamoyl-L-aspartate + phosphate + H(+). Its pathway is pyrimidine metabolism; UMP biosynthesis via de novo pathway; (S)-dihydroorotate from bicarbonate: step 2/3. Its function is as follows. Catalyzes the condensation of carbamoyl phosphate and aspartate to form carbamoyl aspartate and inorganic phosphate, the committed step in the de novo pyrimidine nucleotide biosynthesis pathway. The sequence is that of Aspartate carbamoyltransferase catalytic subunit from Halalkalibacterium halodurans (strain ATCC BAA-125 / DSM 18197 / FERM 7344 / JCM 9153 / C-125) (Bacillus halodurans).